The chain runs to 368 residues: DNA replication and repair protein RecF (368 aa).

30–37 (GDNGAGKT) serves as a coordination point for ATP.

It belongs to the RecF family.

It localises to the cytoplasm. The RecF protein is involved in DNA metabolism; it is required for DNA replication and normal SOS inducibility. RecF binds preferentially to single-stranded, linear DNA. It also seems to bind ATP. The polypeptide is DNA replication and repair protein RecF (Xanthomonas campestris pv. campestris (strain 8004)).